The sequence spans 262 residues: MTGYQPHPWHLVEPSPWPLVGGSAAFTLTVGLVMWFHYNSISLMILGLVMIVATMIQWWRDVIREATFQGCHTSYVLSGLRRGMVLFIVSEVFFFLAFFWAFFHSSLAPTVELGVTWPPVGVHPLNAFAVPLLNTAVLLSSGVTVTWAHHALMEGKRTEAIQSLAITVMLGLYFTGLQAWEYYEAPFTIADSVYGSTFFVATGFHGLHVIIGSTFLMVCLGRQVFYHYTSSHHFGFEAAAWYWHFVDVVWLFLYVCIYWWGS.

Helical transmembrane passes span 11-31 (LVEPSPWPLVGGSAAFTLTVG), 32-52 (LVMWFHYNSISLMILGLVMIV), 83-103 (GMVLFIVSEVFFFLAFFWAFF), 125-147 (LNAFAVPLLNTAVLLSSGVTVTW), 160-180 (AIQSLAITVMLGLYFTGLQAW), 198-218 (FFVATGFHGLHVIIGSTFLMV), and 240-260 (AWYWHFVDVVWLFLYVCIYWW).

This sequence belongs to the cytochrome c oxidase subunit 3 family. In terms of assembly, component of the cytochrome c oxidase (complex IV, CIV), a multisubunit enzyme composed of a catalytic core of 3 subunits and several supernumerary subunits. The complex exists as a monomer or a dimer and forms supercomplexes (SCs) in the inner mitochondrial membrane with ubiquinol-cytochrome c oxidoreductase (cytochrome b-c1 complex, complex III, CIII).

The protein localises to the mitochondrion inner membrane. It carries out the reaction 4 Fe(II)-[cytochrome c] + O2 + 8 H(+)(in) = 4 Fe(III)-[cytochrome c] + 2 H2O + 4 H(+)(out). Component of the cytochrome c oxidase, the last enzyme in the mitochondrial electron transport chain which drives oxidative phosphorylation. The respiratory chain contains 3 multisubunit complexes succinate dehydrogenase (complex II, CII), ubiquinol-cytochrome c oxidoreductase (cytochrome b-c1 complex, complex III, CIII) and cytochrome c oxidase (complex IV, CIV), that cooperate to transfer electrons derived from NADH and succinate to molecular oxygen, creating an electrochemical gradient over the inner membrane that drives transmembrane transport and the ATP synthase. Cytochrome c oxidase is the component of the respiratory chain that catalyzes the reduction of oxygen to water. Electrons originating from reduced cytochrome c in the intermembrane space (IMS) are transferred via the dinuclear copper A center (CU(A)) of subunit 2 and heme A of subunit 1 to the active site in subunit 1, a binuclear center (BNC) formed by heme A3 and copper B (CU(B)). The BNC reduces molecular oxygen to 2 water molecules using 4 electrons from cytochrome c in the IMS and 4 protons from the mitochondrial matrix. The polypeptide is Cytochrome c oxidase subunit 3 (COIII) (Branchiostoma floridae (Florida lancelet)).